An 85-amino-acid chain; its full sequence is Small ribosomal subunit protein uS17 (85 aa).

It belongs to the universal ribosomal protein uS17 family. In terms of assembly, part of the 30S ribosomal subunit.

Functionally, one of the primary rRNA binding proteins, it binds specifically to the 5'-end of 16S ribosomal RNA. In Lachnospira eligens (strain ATCC 27750 / DSM 3376 / VPI C15-48 / C15-B4) (Eubacterium eligens), this protein is Small ribosomal subunit protein uS17.